Consider the following 127-residue polypeptide: Aspartate 1-decarboxylase (127 aa).

The active-site Schiff-base intermediate with substrate; via pyruvic acid is the Ser25. At Ser25 the chain carries Pyruvic acid (Ser). A substrate-binding site is contributed by Thr57. The active-site Proton donor is the Tyr58. 73–75 (GAA) lines the substrate pocket.

Belongs to the PanD family. As to quaternary structure, heterooctamer of four alpha and four beta subunits. The cofactor is pyruvate. Post-translationally, is synthesized initially as an inactive proenzyme, which is activated by self-cleavage at a specific serine bond to produce a beta-subunit with a hydroxyl group at its C-terminus and an alpha-subunit with a pyruvoyl group at its N-terminus.

The protein resides in the cytoplasm. It catalyses the reaction L-aspartate + H(+) = beta-alanine + CO2. Its pathway is cofactor biosynthesis; (R)-pantothenate biosynthesis; beta-alanine from L-aspartate: step 1/1. In terms of biological role, catalyzes the pyruvoyl-dependent decarboxylation of aspartate to produce beta-alanine. The polypeptide is Aspartate 1-decarboxylase (Shouchella clausii (strain KSM-K16) (Alkalihalobacillus clausii)).